The following is a 560-amino-acid chain: Chaperonin GroEL 2 (560 aa).

ATP contacts are provided by residues 29-32, 86-90, Gly-413, 478-480, and Asp-494; these read TLGP, DGTTT, and NAA.

This sequence belongs to the chaperonin (HSP60) family. Forms a cylinder of 14 subunits composed of two heptameric rings stacked back-to-back. Interacts with the co-chaperonin GroES.

The protein resides in the cytoplasm. It carries out the reaction ATP + H2O + a folded polypeptide = ADP + phosphate + an unfolded polypeptide.. Its function is as follows. Together with its co-chaperonin GroES, plays an essential role in assisting protein folding. The GroEL-GroES system forms a nano-cage that allows encapsulation of the non-native substrate proteins and provides a physical environment optimized to promote and accelerate protein folding. This chain is Chaperonin GroEL 2, found in Trichormus variabilis (strain ATCC 29413 / PCC 7937) (Anabaena variabilis).